Reading from the N-terminus, the 307-residue chain is D-alanine--D-alanine ligase (307 aa).

The region spanning 101-301 is the ATP-grasp domain; the sequence is KDVLRAAGVP…FGELVRWMVE (201 aa). Residue 128-182 coordinates ATP; that stretch reads MTPPYVVKPLGEGSSFGVIIVRADQTHPPQELTRDDWAYGDLVLVERFVAGRELT. Mg(2+) contacts are provided by Asp251, Glu268, and Asn270.

Belongs to the D-alanine--D-alanine ligase family. Requires Mg(2+) as cofactor. Mn(2+) is required as a cofactor.

It localises to the cytoplasm. It carries out the reaction 2 D-alanine + ATP = D-alanyl-D-alanine + ADP + phosphate + H(+). The protein operates within cell wall biogenesis; peptidoglycan biosynthesis. Cell wall formation. In Methylocella silvestris (strain DSM 15510 / CIP 108128 / LMG 27833 / NCIMB 13906 / BL2), this protein is D-alanine--D-alanine ligase.